Reading from the N-terminus, the 315-residue chain is Type II restriction enzyme SalI (315 aa).

The enzyme catalyses Endonucleolytic cleavage of DNA to give specific double-stranded fragments with terminal 5'-phosphates.. In terms of biological role, a P subtype restriction enzyme that recognizes the double-stranded sequence 5'-GTCGAC-3' and cleaves after G-1. In Streptomyces albus G, this protein is Type II restriction enzyme SalI.